The chain runs to 449 residues: MEGAWDVAFVLLHVWMSIVAGLIVLPAMFGVSLGFTDIYIKLLVKTLEWATLRIQRGQKEQPTLPLQLANGIIEKDDGSMEEEIVELRRSHPKNLAEGNFTLCDAFYFCKKGIENIVEDQVTQRFSSEELASWNLLTRTNNNFRYISVRLTIIWGLGVFVRYCVLLPLRITLAVIGLSWLVIGTTLVGFLPNSKVKNWLSDLVHITCYRICARGLSATIRYHNKENRPKKGGICVANHTSPIDIVILANDGCYAMVGQVHGGLMGVIQRSMVRSCPHVWFERSEMKDRHAVAKRLKDHISDKTKLPILIFPEGTCINNTSVMMFKKGSFEFGGTIYPVAIKYDPRFGDAFWNSAKYNMVSYILRMMTSWAIVCNVWYLPPMTQQDGEDAVHFANRVKSAIAHQGGLVDLSWDGGLKRSKVKESFKEEQQKMYSSMIVGLDSHEATVGPA.

The next 3 membrane-spanning stretches (helical) occupy residues 9–29, 146–166, and 170–190; these read FVLLHVWMSIVAGLIVLPAMF, ISVRLTIIWGLGVFVRYCVLL, and ITLAVIGLSWLVIGTTLVGFL. The HXXXXD motif motif lies at 238–243; the sequence is HTSPID. Residues 358–378 form a helical membrane-spanning segment; it reads MVSYILRMMTSWAIVCNVWYL.

Belongs to the 1-acyl-sn-glycerol-3-phosphate acyltransferase family.

It is found in the endoplasmic reticulum membrane. The enzyme catalyses sn-glycerol 3-phosphate + an acyl-CoA = a 1-acyl-sn-glycero-3-phosphate + CoA. It carries out the reaction a 1-acyl-sn-glycero-3-phosphate + an acyl-CoA = a 1,2-diacyl-sn-glycero-3-phosphate + CoA. The catalysed reaction is dodecanoyl-CoA + sn-glycerol 3-phosphate = 1-dodecanoyl-sn-glycerol 3-phosphate + CoA. It catalyses the reaction sn-glycerol 3-phosphate + hexadecanoyl-CoA = 1-hexadecanoyl-sn-glycero-3-phosphate + CoA. The enzyme catalyses sn-glycerol 3-phosphate + (9Z)-octadecenoyl-CoA = 1-(9Z-octadecenoyl)-sn-glycero-3-phosphate + CoA. It carries out the reaction (9Z,12Z)-octadecadienoyl-CoA + sn-glycerol 3-phosphate = 1-(9Z,12Z)-octadecadienoyl-sn-glycero-3-phosphate + CoA. The catalysed reaction is 1-tetradecanoyl-sn-glycerol 3-phosphate + (9Z)-octadecenoyl-CoA = 1-tetradecanoyl-2-(9Z)-octadecenoyl-sn-glycero-3-phosphate + CoA. It catalyses the reaction 1-hexadecanoyl-sn-glycero-3-phosphate + (9Z)-octadecenoyl-CoA = 1-hexadecanoyl-2-(9Z-octadecenoyl)-sn-glycero-3-phosphate + CoA. The enzyme catalyses 1-(9Z-octadecenoyl)-sn-glycero-3-phosphate + (9Z)-octadecenoyl-CoA = 1,2-di-(9Z-octadecenoyl)-sn-glycero-3-phosphate + CoA. It carries out the reaction 1-(6Z,9Z,12Z-octadecatrienoyl)-sn-glycero-3-phosphate + (9Z)-octadecenoyl-CoA = (6Z,9Z,12Z)-octadecatrienoyl-2-(9Z)-octadecenoyl-sn-glycero-3-phosphate + CoA. The catalysed reaction is 1-(9Z,12Z,15Z)-octadecatrienoyl-sn-glycero-3-phosphate + (9Z)-octadecenoyl-CoA = 1-(9Z,12Z,15Z)-octadecatrienoyl-2-(9Z)-octadecenoyl-sn-glycero-3-phosphate + CoA. It catalyses the reaction 1-(9Z-octadecenoyl)-sn-glycero-3-phosphate + tetradecanoyl-CoA = 1-(9Z)-octadecenoyl-2-tetradecanoyl-sn-glycero-3-phosphate + CoA. The enzyme catalyses 1-(9Z-octadecenoyl)-sn-glycero-3-phosphate + hexadecanoyl-CoA = 1-(9Z)-octadecenoyl-2-hexadecanoyl-sn-glycero-3-phosphate + CoA. It carries out the reaction 1-(9Z-octadecenoyl)-sn-glycero-3-phosphate + octadecanoyl-CoA = 1-(9Z-octadecenoyl)-2-octadecanoyl-sn-glycero-3-phosphate + CoA. The catalysed reaction is 1-(9Z-octadecenoyl)-sn-glycero-3-phosphate + (9Z,12Z)-octadecadienoyl-CoA = 1-(9Z)-octadecenoyl-2-(9Z,12Z)-octadecadienoyl-sn-glycero-3-phosphate + CoA. It catalyses the reaction 1-(5Z,8Z,11Z,14Z-eicosatetraenoyl)-sn-glycero-3-phosphate + (9Z)-octadecenoyl-CoA = 1-(5Z,8Z,11Z,14Z)-eicosatetraenoyl-2-(9Z)-octadecenoyl-sn-glycero-3-phosphate + CoA. Its pathway is glycerolipid metabolism; triacylglycerol biosynthesis. It functions in the pathway phospholipid metabolism; CDP-diacylglycerol biosynthesis; CDP-diacylglycerol from sn-glycerol 3-phosphate: step 1/3. In terms of biological role, converts glycerol-3-phosphate to 1-acyl-sn-glycerol-3-phosphate (lysophosphatidic acid or LPA) by incorporating an acyl moiety at the sn-1 position of the glycerol backbone. Also converts LPA into 1,2-diacyl-sn-glycerol-3-phosphate (phosphatidic acid or PA) by incorporating an acyl moiety at the sn-2 position of the glycerol backbone. Protects cells against lipotoxicity. The sequence is that of Glycerol-3-phosphate acyltransferase 3 from Danio rerio (Zebrafish).